A 700-amino-acid chain; its full sequence is Serine/threonine-protein kinase WNK1 (700 aa).

Positions 24-281 (GRYNEVLGKG…ARELLDDPFL (258 aa)) constitute a Protein kinase domain. Residues 104–107 (TELF) and Lys154 each bind ATP. Catalysis depends on Asp171, which acts as the Proton acceptor. Residues 314 to 339 (NYPSNSSSLNRQYSNGNYPSNSSSLN) show a composition bias toward low complexity. 3 disordered regions span residues 314 to 345 (NYPSNSSSLNRQYSNGNYPSNSSSLNRQYSNG), 551 to 575 (ESRELSSIDSGHNHSEEEEEEEVLY), and 647 to 666 (ESGEEVEISPKDGFLGSVSG). A compositionally biased stretch (basic and acidic residues) spans 551 to 565 (ESRELSSIDSGHNHS). Residues 566–575 (EEEEEEEVLY) show a composition bias toward acidic residues.

This sequence belongs to the protein kinase superfamily. Ser/Thr protein kinase family. WNK subfamily. In terms of processing, autophosphorylated.

The catalysed reaction is L-seryl-[protein] + ATP = O-phospho-L-seryl-[protein] + ADP + H(+). The enzyme catalyses L-threonyl-[protein] + ATP = O-phospho-L-threonyl-[protein] + ADP + H(+). Functionally, regulates flowering time by modulating the photoperiod pathway. Phosphorylates APRR3. In Arabidopsis thaliana (Mouse-ear cress), this protein is Serine/threonine-protein kinase WNK1 (WNK1).